The following is a 151-amino-acid chain: HTH-type transcriptional regulator TcaR (151 aa).

Residues 1–142 (MVKHLQDHIQ…VRQVLEVINH (142 aa)) form the HTH marR-type domain. Positions 54 to 77 (ISEITQRQGVNKAAVSRRIKKLID) form a DNA-binding region, H-T-H motif.

In terms of biological role, involved in the antibiotic teicoplanin susceptibility. Inactivation of the tcaRAB operon leads to teicoplanin resistance. Its function is as follows. Is a weak negative regulator of transcription of the icaABD operon. This chain is HTH-type transcriptional regulator TcaR (tcaR), found in Staphylococcus aureus (strain COL).